The sequence spans 226 residues: Transcriptional regulatory protein PcoR (226 aa).

The 115-residue stretch at 3–117 folds into the Response regulatory domain; sequence RILIVEDEQK…ELVARVRTLL (115 aa). Residue D52 is modified to 4-aspartylphosphate. The segment at residues 125–223 is a DNA-binding region (ompR/PhoB-type); sequence ATVCTIADMT…VRGAGYVLEI (99 aa).

Post-translationally, phosphorylated by PcoS.

It is found in the cytoplasm. In terms of biological role, probable member of a two-component regulatory system PcoS/PcoR. May be involved in the activation of copper resistance gene operon pcoABCD by binding to a specific site on the cop operon promoter (copper box). In Escherichia coli, this protein is Transcriptional regulatory protein PcoR (pcoR).